Consider the following 154-residue polypeptide: Small ribosomal subunit protein uS19B (154 aa).

Serine 63 carries the phosphoserine modification.

The protein belongs to the universal ribosomal protein uS19 family. Component of the small ribosomal subunit (SSU). Mature yeast ribosomes consist of a small (40S) and a large (60S) subunit. The 40S small subunit contains 1 molecule of ribosomal RNA (18S rRNA) and at least 33 different proteins. The large 60S subunit contains 3 rRNA molecules (25S, 5.8S and 5S rRNA) and at least 46 different proteins.

The protein localises to the cytoplasm. Its subcellular location is the nucleus. It is found in the nucleolus. Its function is as follows. Component of the ribosome, a large ribonucleoprotein complex responsible for the synthesis of proteins in the cell. The small ribosomal subunit (SSU) binds messenger RNAs (mRNAs) and translates the encoded message by selecting cognate aminoacyl-transfer RNA (tRNA) molecules. The large subunit (LSU) contains the ribosomal catalytic site termed the peptidyl transferase center (PTC), which catalyzes the formation of peptide bonds, thereby polymerizing the amino acids delivered by tRNAs into a polypeptide chain. The nascent polypeptides leave the ribosome through a tunnel in the LSU and interact with protein factors that function in enzymatic processing, targeting, and the membrane insertion of nascent chains at the exit of the ribosomal tunnel. uS19 is involved in the nuclear export of the small ribosomal subunit precursor. Has a role in the late stage of the assembly of pre-40S particles within the nucleus and controls their export to the cytoplasm. This chain is Small ribosomal subunit protein uS19B (rps1502), found in Schizosaccharomyces pombe (strain 972 / ATCC 24843) (Fission yeast).